The following is a 550-amino-acid chain: Probable methionine--tRNA ligase, cytoplasmic (550 aa).

Residues 10 to 20 (PYVNNQPHLGN) carry the 'HIGH' region motif. Positions 328–332 (KFSKS) match the 'KMSKS' region motif. Lys331 is a binding site for ATP.

It belongs to the class-I aminoacyl-tRNA synthetase family.

It is found in the cytoplasm. The enzyme catalyses tRNA(Met) + L-methionine + ATP = L-methionyl-tRNA(Met) + AMP + diphosphate. In Encephalitozoon cuniculi (strain GB-M1) (Microsporidian parasite), this protein is Probable methionine--tRNA ligase, cytoplasmic.